We begin with the raw amino-acid sequence, 211 residues long: Glycerol-3-phosphate acyltransferase (211 aa).

A run of 5 helical transmembrane segments spans residues 5-25 (ALGM…ILFC), 58-78 (VLVF…ALGV), 80-100 (PLYL…PVFF), 112-132 (LGAI…TWLL), and 138-158 (GYSS…VWWF).

Belongs to the PlsY family. Probably interacts with PlsX.

It localises to the cell inner membrane. It carries out the reaction an acyl phosphate + sn-glycerol 3-phosphate = a 1-acyl-sn-glycero-3-phosphate + phosphate. Its pathway is lipid metabolism; phospholipid metabolism. Its function is as follows. Catalyzes the transfer of an acyl group from acyl-phosphate (acyl-PO(4)) to glycerol-3-phosphate (G3P) to form lysophosphatidic acid (LPA). This enzyme utilizes acyl-phosphate as fatty acyl donor, but not acyl-CoA or acyl-ACP. The sequence is that of Glycerol-3-phosphate acyltransferase from Pectobacterium atrosepticum (strain SCRI 1043 / ATCC BAA-672) (Erwinia carotovora subsp. atroseptica).